Reading from the N-terminus, the 298-residue chain is Cholesterol 25-hydroxylase (298 aa).

An N-linked (GlcNAc...) asparagine glycan is attached at N5. The next 3 helical transmembrane spans lie at 38 to 58, 88 to 108, and 124 to 144; these read IFPV…FVVL, LGLT…LHWV, and LLSH…AWHL. A Fatty acid hydroxylase domain is found at 128 to 263; that stretch reads VLICLLLFDT…FTHWDKMLGT (136 aa). The Histidine box-1 motif lies at 142 to 146; it reads WHLLH. Residues 157-161 carry the Histidine box-2 motif; sequence HKVHH. N-linked (GlcNAc...) asparagine glycosylation occurs at N163. The short motif at 238–244 is the Histidine box-3 element; the sequence is HHDMHHS.

This sequence belongs to the sterol desaturase family. Requires Fe cation as cofactor. N-glycosylated. Widely expressed at low level and at higher level in the lung. Weakly expressed in the heart, lung and kidney.

It localises to the endoplasmic reticulum membrane. It carries out the reaction cholesterol + AH2 + O2 = 25-hydroxycholesterol + A + H2O. The catalysed reaction is cholesterol + NADPH + O2 + H(+) = 25-hydroxycholesterol + NADP(+) + H2O. In terms of biological role, catalyzes the formation of 25-hydroxycholesterol from cholesterol, leading to repress cholesterol biosynthetic enzymes. Plays a key role in cell positioning and movement in lymphoid tissues: 25-hydroxycholesterol is an intermediate in biosynthesis of 7-alpha,25-dihydroxycholesterol (7-alpha,25-OHC), an oxysterol that acts as a ligand for the G protein-coupled receptor GPR183/EBI2, a chemotactic receptor for a number of lymphoid cells. May play an important role in regulating lipid metabolism by synthesizing a corepressor that blocks sterol regulatory element binding protein (SREBP) processing. In testis, production of 25-hydroxycholesterol by macrophages may play a role in Leydig cell differentiation. Required to restrain inflammation in macrophages: production of 25-hydroxycholesterol protects macrophages from cholesterol overload, thereby preventing mitochondrial DNA release and subsequent activation of the AIM2 inflammasome. Interferon-stimulated gene which has broad antiviral activities against a wide range of enveloped viruses. This Mus musculus (Mouse) protein is Cholesterol 25-hydroxylase.